A 192-amino-acid polypeptide reads, in one-letter code: dCTP deaminase, dUMP-forming (192 aa).

Residues 101–106 (KSSLGR), D119, 127–129 (TLE), Q148, Y162, and Q174 contribute to the dCTP site. E129 acts as the Proton donor/acceptor in catalysis. Positions 169-192 (SRYQGQRGPTPSRSWQSWRTWPTR) are disordered. The span at 171-192 (YQGQRGPTPSRSWQSWRTWPTR) shows a compositional bias: polar residues.

This sequence belongs to the dCTP deaminase family. In terms of assembly, homotrimer.

It catalyses the reaction dCTP + 2 H2O = dUMP + NH4(+) + diphosphate. It functions in the pathway pyrimidine metabolism; dUMP biosynthesis; dUMP from dCTP: step 1/1. Bifunctional enzyme that catalyzes both the deamination of dCTP to dUTP and the hydrolysis of dUTP to dUMP without releasing the toxic dUTP intermediate. The chain is dCTP deaminase, dUMP-forming from Salinispora tropica (strain ATCC BAA-916 / DSM 44818 / JCM 13857 / NBRC 105044 / CNB-440).